Consider the following 393-residue polypeptide: NAD(P)H-quinone oxidoreductase subunit H, chloroplastic (393 aa).

Belongs to the complex I 49 kDa subunit family. In terms of assembly, NDH is composed of at least 16 different subunits, 5 of which are encoded in the nucleus.

The protein resides in the plastid. It localises to the chloroplast thylakoid membrane. The catalysed reaction is a plastoquinone + NADH + (n+1) H(+)(in) = a plastoquinol + NAD(+) + n H(+)(out). The enzyme catalyses a plastoquinone + NADPH + (n+1) H(+)(in) = a plastoquinol + NADP(+) + n H(+)(out). Its function is as follows. NDH shuttles electrons from NAD(P)H:plastoquinone, via FMN and iron-sulfur (Fe-S) centers, to quinones in the photosynthetic chain and possibly in a chloroplast respiratory chain. The immediate electron acceptor for the enzyme in this species is believed to be plastoquinone. Couples the redox reaction to proton translocation, and thus conserves the redox energy in a proton gradient. The polypeptide is NAD(P)H-quinone oxidoreductase subunit H, chloroplastic (Oenothera argillicola (Appalachian evening primrose)).